A 341-amino-acid polypeptide reads, in one-letter code: Mitochondrial dimethyladenosine transferase 1 (341 aa).

Residues 1 to 27 constitute a mitochondrion transit peptide; sequence MASSRTLGTFRLPPLPTIREIIKLFRL. Residues L38, G63, E85, K86, D111, V112, and N141 each contribute to the S-adenosyl-L-methionine site.

It belongs to the class I-like SAM-binding methyltransferase superfamily. rRNA adenine N(6)-methyltransferase family. KsgA subfamily. In terms of assembly, interacts with mitochondrial RNA polymerase POLRMT. Interacts with TFAM. Bound to the maturing mtSSU until the late stages of assembly.

It is found in the mitochondrion. The enzyme catalyses adenosine(N)/adenosine(N+1) in rRNA + 4 S-adenosyl-L-methionine = N(6)-dimethyladenosine(N)/N(6)-dimethyladenosine(N+1) in rRNA + 4 S-adenosyl-L-homocysteine + 4 H(+). Functionally, mitochondrial methyltransferase which uses S-adenosyl methionine to dimethylate two highly conserved adjacent adenosine residues (A1583 and A1584) within the loop of helix 45 at the 3-prime end of 12S rRNA, thereby regulating the assembly or stability of the small subunit of the mitochondrial ribosome. Also required for basal transcription of mitochondrial DNA, probably via its interaction with POLRMT and TFAM. Stimulates transcription independently of the methyltransferase activity. In Bos taurus (Bovine), this protein is Mitochondrial dimethyladenosine transferase 1 (TFB1M).